Here is a 357-residue protein sequence, read N- to C-terminus: UDP-N-acetylglucosamine--N-acetylmuramyl-(pentapeptide) pyrophosphoryl-undecaprenol N-acetylglucosamine transferase (357 aa).

UDP-N-acetyl-alpha-D-glucosamine is bound by residues 13–15 (SAG), arginine 166, serine 196, and glutamine 291.

The protein belongs to the glycosyltransferase 28 family. MurG subfamily.

Its subcellular location is the cell membrane. The catalysed reaction is di-trans,octa-cis-undecaprenyl diphospho-N-acetyl-alpha-D-muramoyl-L-alanyl-D-glutamyl-meso-2,6-diaminopimeloyl-D-alanyl-D-alanine + UDP-N-acetyl-alpha-D-glucosamine = di-trans,octa-cis-undecaprenyl diphospho-[N-acetyl-alpha-D-glucosaminyl-(1-&gt;4)]-N-acetyl-alpha-D-muramoyl-L-alanyl-D-glutamyl-meso-2,6-diaminopimeloyl-D-alanyl-D-alanine + UDP + H(+). It functions in the pathway cell wall biogenesis; peptidoglycan biosynthesis. Its function is as follows. Cell wall formation. Catalyzes the transfer of a GlcNAc subunit on undecaprenyl-pyrophosphoryl-MurNAc-pentapeptide (lipid intermediate I) to form undecaprenyl-pyrophosphoryl-MurNAc-(pentapeptide)GlcNAc (lipid intermediate II). In Clostridium perfringens (strain SM101 / Type A), this protein is UDP-N-acetylglucosamine--N-acetylmuramyl-(pentapeptide) pyrophosphoryl-undecaprenol N-acetylglucosamine transferase.